The chain runs to 351 residues: Dihydroorotate dehydrogenase (quinone) (351 aa).

FMN is bound by residues 61-65 (AGLDK) and Thr85. A substrate-binding site is contributed by Lys65. A substrate-binding site is contributed by 110–114 (NRMGF). Residues Asn139 and Asn172 each contribute to the FMN site. Asn172 contacts substrate. The active-site Nucleophile is Ser175. Position 177 (Asn177) interacts with substrate. FMN contacts are provided by Lys217 and Thr245. 246–247 (NT) serves as a coordination point for substrate. FMN contacts are provided by residues Gly268, Gly297, and 318-319 (YS).

The protein belongs to the dihydroorotate dehydrogenase family. Type 2 subfamily. As to quaternary structure, monomer. Requires FMN as cofactor.

Its subcellular location is the cell membrane. It carries out the reaction (S)-dihydroorotate + a quinone = orotate + a quinol. It participates in pyrimidine metabolism; UMP biosynthesis via de novo pathway; orotate from (S)-dihydroorotate (quinone route): step 1/1. Functionally, catalyzes the conversion of dihydroorotate to orotate with quinone as electron acceptor. The protein is Dihydroorotate dehydrogenase (quinone) of Xanthomonas campestris pv. campestris (strain 8004).